Here is a 247-residue protein sequence, read N- to C-terminus: Adenosylcobinamide-GDP ribazoletransferase (247 aa).

5 consecutive transmembrane segments (helical) span residues 34-54 (IITFPLIGLLLGAISGLVFMV), 59-79 (CGVPLAALFSVLVLALMTGGF), 113-133 (GGLALIFVVLAKILVLSELAL), 138-158 (ILASLAAACAVSRGIAALLMY), and 194-214 (VLLPGMHGVAAMVVTMVAIFI).

This sequence belongs to the CobS family. Mg(2+) is required as a cofactor.

The protein resides in the cell inner membrane. The enzyme catalyses alpha-ribazole + adenosylcob(III)inamide-GDP = adenosylcob(III)alamin + GMP + H(+). It carries out the reaction alpha-ribazole 5'-phosphate + adenosylcob(III)inamide-GDP = adenosylcob(III)alamin 5'-phosphate + GMP + H(+). It functions in the pathway cofactor biosynthesis; adenosylcobalamin biosynthesis; adenosylcobalamin from cob(II)yrinate a,c-diamide: step 7/7. Functionally, joins adenosylcobinamide-GDP and alpha-ribazole to generate adenosylcobalamin (Ado-cobalamin). Also synthesizes adenosylcobalamin 5'-phosphate from adenosylcobinamide-GDP and alpha-ribazole 5'-phosphate. The sequence is that of Adenosylcobinamide-GDP ribazoletransferase from Shigella dysenteriae serotype 1 (strain Sd197).